A 406-amino-acid chain; its full sequence is Endoplasmic reticulum resident protein 44 (406 aa).

Residues 1–29 (MNPAVFLSLADLRCSLLLLVTSIFTPITA) form the signal peptide. A Thioredoxin domain is found at 30–138 (EIASLDSENI…VKALADYIRQ (109 aa)). 2 cysteine pairs are disulfide-bonded: Cys189/Cys241 and Cys301/Cys318. The segment at 236–285 (WIQDKCVPLVREITFENGEELTEEGLPFLILFHMKDDTESLEIFQNEVAR) is interaction with ITPR1. Residues 360–387 (FHHGPDPTDTAPGEQDQDVASSPPESSF) are disordered. Residues 377-387 (DVASSPPESSF) show a composition bias toward polar residues. Residues 403 to 406 (RDEL) carry the Prevents secretion from ER motif.

Forms mixed disulfides with both ERO1A and ERO1B and cargo folding intermediates; the interactions with ERO1A and ERO1B result in their retention in the endoplasmic reticulum. Directly interacts with ITPR1 in a pH-, redox state- and calcium-dependent manner, but not with ITPR2 or ITPR3. The strength of this interaction inversely correlates with calcium concentration. In terms of tissue distribution, widely expressed.

The protein localises to the endoplasmic reticulum lumen. Mediates thiol-dependent retention in the early secretory pathway, forming mixed disulfides with substrate proteins through its conserved CRFS motif. Inhibits the calcium channel activity of ITPR1. May have a role in the control of oxidative protein folding in the endoplasmic reticulum. Required to retain ERO1A and ERO1B in the endoplasmic reticulum. The sequence is that of Endoplasmic reticulum resident protein 44 (Erp44) from Mus musculus (Mouse).